The primary structure comprises 138 residues: Transcription factor Atoh7-a (138 aa).

Residues 33–85 (KRRLAANARERRRMQGLNTAFDSLRKVVPQWGEDKQLSKYETLQMALSYIMAL) enclose the bHLH domain.

The protein resides in the nucleus. The protein localises to the perikaryon. It is found in the cell projection. Its subcellular location is the axon. Transcription factor that binds to DNA at the consensus sequence 5'-CAG[GC]TG-3'. Positively regulates the determination of retinal ganglion cell fate and formation of the optic nerve and retino-hypothalamic tract. Required for retinal circadian rhythm photoentrainment. Plays a role in brainstem auditory signaling and binaural processing. Regulates the differentiation of olfactory receptor neurons. During retinal neurogenesis, activates the transcription of several genes such as brn3d, coe3, cbfa2t2, glis2, elrC and xgadd45-gamma. The sequence is that of Transcription factor Atoh7-a from Xenopus laevis (African clawed frog).